The chain runs to 132 residues: Acyl carrier protein 3, chloroplastic (132 aa).

Residues 1–49 constitute a chloroplast transit peptide; sequence MASIAGSAVSFAKPVKAINTNSLSFSGARRGNAFLRLQPVPMRFAVCCS. One can recognise a Carrier domain in the interval 52–127; that stretch reads QDTVEKVCEI…DAATLIDKLV (76 aa). Ser-87 bears the O-(pantetheine 4'-phosphoryl)serine mark.

It belongs to the acyl carrier protein (ACP) family. Post-translationally, 4'-phosphopantetheine is transferred from CoA to a specific serine of apo-ACP by acpS. This modification is essential for activity because fatty acids are bound in thioester linkage to the sulfhydryl of the prosthetic group.

The protein resides in the plastid. The protein localises to the chloroplast. It functions in the pathway lipid metabolism; fatty acid biosynthesis. Carrier of the growing fatty acid chain in fatty acid biosynthesis. This chain is Acyl carrier protein 3, chloroplastic (ACL1.3), found in Hordeum vulgare (Barley).